Here is a 176-residue protein sequence, read N- to C-terminus: Thiol-disulfide oxidoreductase ResA (176 aa).

Residues 11–30 traverse the membrane as a helical; Signal-anchor for type II membrane protein segment; that stretch reads LSILAVISVALGYTFYSNFF. In terms of domain architecture, Thioredoxin spans 36-176; the sequence is ARAGEQAVNF…EFMELIKPEA (141 aa). Cys74 and Cys77 are disulfide-bonded.

The protein belongs to the thioredoxin family. ResA subfamily.

The protein localises to the cell membrane. The protein operates within protein modification; cytochrome c assembly. Its function is as follows. Thiol-disulfide oxidoreductase which is required in disulfide reduction during c-type cytochrome synthesis. May accept reducing equivalents from CcdA, leading to breakage of disulfide bonds in apocytochrome c; following this reduction heme can be covalently attached. This Halalkalibacterium halodurans (strain ATCC BAA-125 / DSM 18197 / FERM 7344 / JCM 9153 / C-125) (Bacillus halodurans) protein is Thiol-disulfide oxidoreductase ResA.